The following is a 248-amino-acid chain: Pyridoxine 5'-phosphate synthase (248 aa).

Asn7 contacts 3-amino-2-oxopropyl phosphate. 9–10 (DH) contributes to the 1-deoxy-D-xylulose 5-phosphate binding site. Arg18 is a 3-amino-2-oxopropyl phosphate binding site. Residue His52 is the Proton acceptor of the active site. Arg54 and His59 together coordinate 1-deoxy-D-xylulose 5-phosphate. The active-site Proton acceptor is the Glu79. 1-deoxy-D-xylulose 5-phosphate is bound at residue Thr109. His201 functions as the Proton donor in the catalytic mechanism. 3-amino-2-oxopropyl phosphate-binding positions include Gly202 and 223–224 (GH).

The protein belongs to the PNP synthase family. In terms of assembly, homooctamer; tetramer of dimers.

It localises to the cytoplasm. The enzyme catalyses 3-amino-2-oxopropyl phosphate + 1-deoxy-D-xylulose 5-phosphate = pyridoxine 5'-phosphate + phosphate + 2 H2O + H(+). Its pathway is cofactor biosynthesis; pyridoxine 5'-phosphate biosynthesis; pyridoxine 5'-phosphate from D-erythrose 4-phosphate: step 5/5. Its function is as follows. Catalyzes the complicated ring closure reaction between the two acyclic compounds 1-deoxy-D-xylulose-5-phosphate (DXP) and 3-amino-2-oxopropyl phosphate (1-amino-acetone-3-phosphate or AAP) to form pyridoxine 5'-phosphate (PNP) and inorganic phosphate. The polypeptide is Pyridoxine 5'-phosphate synthase (Opitutus terrae (strain DSM 11246 / JCM 15787 / PB90-1)).